Consider the following 386-residue polypeptide: Succinate--CoA ligase [ADP-forming] subunit beta (386 aa).

One can recognise an ATP-grasp domain in the interval 9 to 244; the sequence is KELLRQYGVA…LDEEDPKEIE (236 aa). ATP-binding positions include lysine 46, 53-55, glutamate 99, cysteine 102, and glutamate 107; that span reads GRG. Residues asparagine 199 and aspartate 213 each coordinate Mg(2+). Residues asparagine 264 and 321-323 contribute to the substrate site; that span reads GIM.

It belongs to the succinate/malate CoA ligase beta subunit family. In terms of assembly, heterotetramer of two alpha and two beta subunits. Requires Mg(2+) as cofactor.

The enzyme catalyses succinate + ATP + CoA = succinyl-CoA + ADP + phosphate. The catalysed reaction is GTP + succinate + CoA = succinyl-CoA + GDP + phosphate. Its pathway is carbohydrate metabolism; tricarboxylic acid cycle; succinate from succinyl-CoA (ligase route): step 1/1. In terms of biological role, succinyl-CoA synthetase functions in the citric acid cycle (TCA), coupling the hydrolysis of succinyl-CoA to the synthesis of either ATP or GTP and thus represents the only step of substrate-level phosphorylation in the TCA. The beta subunit provides nucleotide specificity of the enzyme and binds the substrate succinate, while the binding sites for coenzyme A and phosphate are found in the alpha subunit. This chain is Succinate--CoA ligase [ADP-forming] subunit beta, found in Halalkalibacterium halodurans (strain ATCC BAA-125 / DSM 18197 / FERM 7344 / JCM 9153 / C-125) (Bacillus halodurans).